Here is a 182-residue protein sequence, read N- to C-terminus: MANSEKTAAVAEIAEDFRGSSAAVLTEYRGLTVSQLTELRRALGETTRYAVVKNTLTKIAAAQAGVTGIDELLVGPTAVAFVGGDPVEAAKGLRDFARANPALVVKGGVVEGKAMNADEIRRLADLESREVLLAKMAGAMNGSLAKAVGLFAAPLSQVARLAEALRAQREETAGAEPVSVDA.

It belongs to the universal ribosomal protein uL10 family. In terms of assembly, part of the ribosomal stalk of the 50S ribosomal subunit. The N-terminus interacts with L11 and the large rRNA to form the base of the stalk. The C-terminus forms an elongated spine to which L12 dimers bind in a sequential fashion forming a multimeric L10(L12)X complex.

Functionally, forms part of the ribosomal stalk, playing a central role in the interaction of the ribosome with GTP-bound translation factors. This is Large ribosomal subunit protein uL10 from Parafrankia sp. (strain EAN1pec).